The following is a 170-amino-acid chain: Ribosome maturation factor RimM (170 aa).

The region spanning 98–170 (PDEYYWVDLE…LIVVDWDPDF (73 aa)) is the PRC barrel domain.

The protein belongs to the RimM family. Binds ribosomal protein uS19.

The protein resides in the cytoplasm. Functionally, an accessory protein needed during the final step in the assembly of 30S ribosomal subunit, possibly for assembly of the head region. Essential for efficient processing of 16S rRNA. May be needed both before and after RbfA during the maturation of 16S rRNA. It has affinity for free ribosomal 30S subunits but not for 70S ribosomes. This chain is Ribosome maturation factor RimM, found in Xanthomonas axonopodis pv. citri (strain 306).